The primary structure comprises 261 residues: MEVVIVPDARAGGELIAEAMAQLLGRKPEALLGVATGSTPLPIYEALAAQVKSGAVDASRARIAQLDEYVGLPAEHPESYRSVLRREVLEPLGLGMDAFMGPDGTAEDVQGACEAYDKALAAAGGVDLQLLGIGTDGHIGFNEPCSSLASRTRIKTLTEQTRVDNARFFDGDIEQVPHHVITQGIGTILEARHLVLLATGEGKADAVAATVEGPVAAVCPASALQLHPHATVVVDDAAASKLKLADYFRHTYAGKPDWQGI.

The active-site Proton acceptor; for enolization step is the D67. The active-site For ring-opening step is D136. H138 (proton acceptor; for ring-opening step) is an active-site residue. E143 acts as the For ring-opening step in catalysis.

It belongs to the glucosamine/galactosamine-6-phosphate isomerase family. NagB subfamily.

It carries out the reaction alpha-D-glucosamine 6-phosphate + H2O = beta-D-fructose 6-phosphate + NH4(+). Its pathway is amino-sugar metabolism; N-acetylneuraminate degradation; D-fructose 6-phosphate from N-acetylneuraminate: step 5/5. Catalyzes the reversible isomerization-deamination of glucosamine 6-phosphate (GlcN6P) to form fructose 6-phosphate (Fru6P) and ammonium ion. This Streptomyces avermitilis (strain ATCC 31267 / DSM 46492 / JCM 5070 / NBRC 14893 / NCIMB 12804 / NRRL 8165 / MA-4680) protein is Glucosamine-6-phosphate deaminase.